A 759-amino-acid chain; its full sequence is Subtilisin-like serine-protease S (759 aa).

A signal peptide spans 1–22 (MGSAKILSFTLLLFVGYTLVHG). Residues 28–105 (YIVYMGDRSH…SVFESKMNKL (78 aa)) enclose the Inhibitor I9 domain. The region spanning 110-613 (SWDFLGLDTV…SGHVNPVASL (504 aa)) is the Peptidase S8 domain. The active-site Charge relay system is the Asp139. Residue Asn170 is glycosylated (N-linked (GlcNAc...) asparagine). His215 acts as the Charge relay system in catalysis. Asn230 and Asn388 each carry an N-linked (GlcNAc...) asparagine glycan. Residues 390-462 (SFCKEHTLDP…MIGQDAVEEL (73 aa)) form the PA domain. Catalysis depends on Ser545, which acts as the Charge relay system. N-linked (GlcNAc...) asparagine glycans are attached at residues Asn593, Asn642, and Asn671.

Belongs to the peptidase S8 family.

The protein resides in the secreted. Its subcellular location is the extracellular space. The protein localises to the apoplast. Functionally, required for arbuscular mycorrhiza (AM) development during AM symbiosis with AM fungi (e.g. Glomeromycota intraradices). The protein is Subtilisin-like serine-protease S of Lotus japonicus (Lotus corniculatus var. japonicus).